A 208-amino-acid chain; its full sequence is ATP synthase subunit beta, chloroplastic (208 aa).

Belongs to the ATPase alpha/beta chains family. F-type ATPases have 2 components, CF(1) - the catalytic core - and CF(0) - the membrane proton channel. CF(1) has five subunits: alpha(3), beta(3), gamma(1), delta(1), epsilon(1). CF(0) has four main subunits: a(1), b(1), b'(1) and c(9-12).

The protein resides in the plastid. It is found in the chloroplast thylakoid membrane. It catalyses the reaction ATP + H2O + 4 H(+)(in) = ADP + phosphate + 5 H(+)(out). Its function is as follows. Produces ATP from ADP in the presence of a proton gradient across the membrane. The catalytic sites are hosted primarily by the beta subunits. This Lonchitis hirsuta (Tomato fern) protein is ATP synthase subunit beta, chloroplastic (atpB).